Consider the following 476-residue polypeptide: Proline--tRNA ligase (476 aa).

The protein belongs to the class-II aminoacyl-tRNA synthetase family. ProS type 3 subfamily. In terms of assembly, homodimer.

Its subcellular location is the cytoplasm. The enzyme catalyses tRNA(Pro) + L-proline + ATP = L-prolyl-tRNA(Pro) + AMP + diphosphate. In terms of biological role, catalyzes the attachment of proline to tRNA(Pro) in a two-step reaction: proline is first activated by ATP to form Pro-AMP and then transferred to the acceptor end of tRNA(Pro). In Mycoplasmopsis pulmonis (strain UAB CTIP) (Mycoplasma pulmonis), this protein is Proline--tRNA ligase.